Here is a 468-residue protein sequence, read N- to C-terminus: Immunoglobulin superfamily member 21 (468 aa).

The N-terminal stretch at 1 to 24 (MQAAPSLRRASCLLLAAILDLARG) is a signal peptide. Residues 25–132 (YLTVNIEPLP…RATREKVVLA (108 aa)) form the Ig-like 1 domain. The cysteines at positions 46 and 116 are disulfide-linked. N-linked (GlcNAc...) asparagine glycosylation is found at Asn82, Asn165, and Asn407. Positions 344–429 (PKIMMTPSRA…GSTDTHTRLI (86 aa)) constitute an Ig-like 2 domain.

In terms of assembly, interacts (Ig-like 1 domain) with NRXN2 (via Laminin G-like 1 domain) in a trans-interaction manner. Expressed in brain (at protein levels). Highly expressed in the pyramidal cell layer of the dorsal and ventral hippocampal CA1 and CA3 regions, layers 5 and 6 of the cortex, the thalamus and the pons and weakly expressed in the cerebellum. Expressed in neurons but not in glia.

Its subcellular location is the postsynaptic cell membrane. Involved in synaptic inhibition in the brain. Selectively regulates inhibitory presynaptic differentiation through interacting with presynaptic NRXN2. The chain is Immunoglobulin superfamily member 21 (Igsf21) from Mus musculus (Mouse).